Consider the following 83-residue polypeptide: Small ribosomal subunit protein uS17 (83 aa).

The protein belongs to the universal ribosomal protein uS17 family. Part of the 30S ribosomal subunit.

Its function is as follows. One of the primary rRNA binding proteins, it binds specifically to the 5'-end of 16S ribosomal RNA. This is Small ribosomal subunit protein uS17 from Campylobacter concisus (strain 13826).